Here is a 237-residue protein sequence, read N- to C-terminus: Ribosomal RNA small subunit methyltransferase G (237 aa).

S-adenosyl-L-methionine is bound by residues G78, F83, 129 to 130 (AE), and R148.

The protein belongs to the methyltransferase superfamily. RNA methyltransferase RsmG family.

The protein resides in the cytoplasm. Its function is as follows. Specifically methylates the N7 position of a guanine in 16S rRNA. The polypeptide is Ribosomal RNA small subunit methyltransferase G (Streptococcus pyogenes serotype M1).